A 343-amino-acid chain; its full sequence is Heat-inducible transcription repressor HrcA (343 aa).

It belongs to the HrcA family.

Functionally, negative regulator of class I heat shock genes (grpE-dnaK-dnaJ and groELS operons). Prevents heat-shock induction of these operons. In Thermoanaerobacter pseudethanolicus (strain ATCC 33223 / 39E) (Clostridium thermohydrosulfuricum), this protein is Heat-inducible transcription repressor HrcA.